A 189-amino-acid chain; its full sequence is Thymidine kinase (189 aa).

ATP contacts are provided by residues 9–16 and 85–88; these read GTMNSGKT and DECQ. Glutamate 86 functions as the Proton acceptor in the catalytic mechanism. Zn(2+) is bound by residues cysteine 143, cysteine 146, cysteine 180, and histidine 183.

It belongs to the thymidine kinase family. In terms of assembly, homotetramer.

It is found in the cytoplasm. The catalysed reaction is thymidine + ATP = dTMP + ADP + H(+). This chain is Thymidine kinase, found in Streptococcus agalactiae serotype Ia (strain ATCC 27591 / A909 / CDC SS700).